A 157-amino-acid chain; its full sequence is Transcription elongation factor GreA (157 aa).

Residues 13 to 75 (RARLEAELEE…EIKSILARAQ (63 aa)) adopt a coiled-coil conformation.

It belongs to the GreA/GreB family.

Its function is as follows. Necessary for efficient RNA polymerase transcription elongation past template-encoded arresting sites. The arresting sites in DNA have the property of trapping a certain fraction of elongating RNA polymerases that pass through, resulting in locked ternary complexes. Cleavage of the nascent transcript by cleavage factors such as GreA or GreB allows the resumption of elongation from the new 3'terminus. GreA releases sequences of 2 to 3 nucleotides. The protein is Transcription elongation factor GreA of Roseiflexus castenholzii (strain DSM 13941 / HLO8).